Here is a 1025-residue protein sequence, read N- to C-terminus: Serine/threonine-protein kinase TAO2 (1025 aa).

Positions 28–281 (FADLREIGHG…SDMLLKHRFL (254 aa)) constitute a Protein kinase domain. ATP contacts are provided by residues 34-42 (IGHGSFGAV) and K57. The active-site Proton acceptor is the D151. The segment covering 349–373 (ESSQSVPSMSISASSQSSSVNSLAD) has biased composition (low complexity). Positions 349 to 377 (ESSQSVPSMSISASSQSSSVNSLADASDD) are disordered. 2 coiled-coil regions span residues 457–650 (SALR…ECAM) and 755–876 (ILKR…EIEA). Disordered regions lie at residues 899-930 (FNQG…QNTG) and 945-1025 (SASW…LSYS). Over residues 905 to 914 (APPPGWPSRP) the composition is skewed to pro residues. Residues 947–986 (SWGLHPPGSSSSLSALPSSSSSSSSSPSSSSGGRPGLLLL) are compositionally biased toward low complexity. A compositionally biased stretch (polar residues) spans 1007–1025 (SRSTSVTSQLSNGSHLSYS).

It belongs to the protein kinase superfamily. STE Ser/Thr protein kinase family. STE20 subfamily. The cofactor is Mg(2+).

It carries out the reaction L-seryl-[protein] + ATP = O-phospho-L-seryl-[protein] + ADP + H(+). The enzyme catalyses L-threonyl-[protein] + ATP = O-phospho-L-threonyl-[protein] + ADP + H(+). Serine/threonine-protein kinase involved in different processes such as apoptotic morphological changes, MAPK8/JNK and MAPK14/p38 MAPK signaling pathway. In terms of biological role, activates the JNK MAP kinase pathway. This chain is Serine/threonine-protein kinase TAO2 (taok2), found in Xenopus laevis (African clawed frog).